Here is a 120-residue protein sequence, read N- to C-terminus: Ribosome-binding factor A (120 aa).

The protein belongs to the RbfA family. In terms of assembly, monomer. Binds 30S ribosomal subunits, but not 50S ribosomal subunits or 70S ribosomes.

The protein resides in the cytoplasm. One of several proteins that assist in the late maturation steps of the functional core of the 30S ribosomal subunit. Associates with free 30S ribosomal subunits (but not with 30S subunits that are part of 70S ribosomes or polysomes). Required for efficient processing of 16S rRNA. May interact with the 5'-terminal helix region of 16S rRNA. The polypeptide is Ribosome-binding factor A (Buchnera aphidicola subsp. Acyrthosiphon pisum (strain 5A)).